Reading from the N-terminus, the 66-residue chain is Protein translocase subunit SecE (66 aa).

Residues 29–49 (LVASTLVVVVAVFIFSLICLV) traverse the membrane as a helical segment.

It belongs to the SecE/SEC61-gamma family. As to quaternary structure, component of the Sec protein translocase complex. Heterotrimer consisting of SecY, SecE and SecG subunits. The heterotrimers can form oligomers, although 1 heterotrimer is thought to be able to translocate proteins. Interacts with the ribosome. Interacts with SecDF, and other proteins may be involved. Interacts with SecA.

The protein resides in the cell inner membrane. Functionally, essential subunit of the Sec protein translocation channel SecYEG. Clamps together the 2 halves of SecY. May contact the channel plug during translocation. The sequence is that of Protein translocase subunit SecE from Rickettsia felis (strain ATCC VR-1525 / URRWXCal2) (Rickettsia azadi).